Here is a 152-residue protein sequence, read N- to C-terminus: Ribosome maturation factor RimP (152 aa).

This sequence belongs to the RimP family.

Its subcellular location is the cytoplasm. Functionally, required for maturation of 30S ribosomal subunits. This is Ribosome maturation factor RimP from Proteus mirabilis (strain HI4320).